Reading from the N-terminus, the 422-residue chain is Zinc finger protein 550 (422 aa).

The KRAB domain maps to 12-83 (VTFKDVAVTF…KRGLSHATCA (72 aa)). Residues 113 to 158 (LESSTSSDSRLGRARDEEGLLEMQKGKVTPETDLHKETHLGKVSLE) form a disordered region. The span at 122–152 (RLGRARDEEGLLEMQKGKVTPETDLHKETHL) shows a compositional bias: basic and acidic residues. 8 consecutive C2H2-type zinc fingers follow at residues 203-225 (YKCK…QRVH), 231-253 (YECN…YLIH), 259-281 (YKCL…HPIH), 287-309 (YECS…NRTH), 315-337 (FECK…YIIH), 343-365 (YDCM…QRIH), 371-393 (YECT…SVIH), and 399-421 (YKCI…QRVH).

The protein belongs to the krueppel C2H2-type zinc-finger protein family.

The protein resides in the nucleus. Its function is as follows. May be involved in transcriptional regulation. The sequence is that of Zinc finger protein 550 (ZNF550) from Homo sapiens (Human).